The following is a 904-amino-acid chain: Phosphoenolpyruvate carboxylase (904 aa).

Active-site residues include histidine 151 and lysine 570.

The protein belongs to the PEPCase type 1 family. Mg(2+) is required as a cofactor.

The catalysed reaction is oxaloacetate + phosphate = phosphoenolpyruvate + hydrogencarbonate. Its function is as follows. Forms oxaloacetate, a four-carbon dicarboxylic acid source for the tricarboxylic acid cycle. This chain is Phosphoenolpyruvate carboxylase, found in Xanthomonas campestris pv. campestris (strain ATCC 33913 / DSM 3586 / NCPPB 528 / LMG 568 / P 25).